We begin with the raw amino-acid sequence, 122 residues long: Secretion system apparatus protein SsaM (122 aa).

In Salmonella typhimurium (strain LT2 / SGSC1412 / ATCC 700720), this protein is Secretion system apparatus protein SsaM (ssaM).